A 255-amino-acid chain; its full sequence is Pyridoxine 5'-phosphate synthase (255 aa).

The 3-amino-2-oxopropyl phosphate site is built by Asn8 and Arg19. Catalysis depends on His44, which acts as the Proton acceptor. Positions 46 and 51 each coordinate 1-deoxy-D-xylulose 5-phosphate. Glu74 acts as the Proton acceptor in catalysis. Thr111 lines the 1-deoxy-D-xylulose 5-phosphate pocket. Catalysis depends on His202, which acts as the Proton donor. Residues Asp203 and 225-226 each bind 3-amino-2-oxopropyl phosphate; that span reads GH.

The protein belongs to the PNP synthase family. As to quaternary structure, homooctamer; tetramer of dimers.

Its subcellular location is the cytoplasm. It catalyses the reaction 3-amino-2-oxopropyl phosphate + 1-deoxy-D-xylulose 5-phosphate = pyridoxine 5'-phosphate + phosphate + 2 H2O + H(+). The protein operates within cofactor biosynthesis; pyridoxine 5'-phosphate biosynthesis; pyridoxine 5'-phosphate from D-erythrose 4-phosphate: step 5/5. In terms of biological role, catalyzes the complicated ring closure reaction between the two acyclic compounds 1-deoxy-D-xylulose-5-phosphate (DXP) and 3-amino-2-oxopropyl phosphate (1-amino-acetone-3-phosphate or AAP) to form pyridoxine 5'-phosphate (PNP) and inorganic phosphate. The polypeptide is Pyridoxine 5'-phosphate synthase (Xanthomonas oryzae pv. oryzae (strain MAFF 311018)).